The chain runs to 237 residues: Uridylate kinase (237 aa).

10-13 is an ATP binding site; the sequence is KFSG. The segment at 18–23 is involved in allosteric activation by GTP; that stretch reads GDSGFG. G52 lines the UMP pocket. G53 and R57 together coordinate ATP. UMP contacts are provided by residues D73 and 134–141; that span reads TGNPFFTT. 3 residues coordinate ATP: T161, Y167, and D170.

The protein belongs to the UMP kinase family. Homohexamer.

The protein localises to the cytoplasm. It catalyses the reaction UMP + ATP = UDP + ADP. It participates in pyrimidine metabolism; CTP biosynthesis via de novo pathway; UDP from UMP (UMPK route): step 1/1. With respect to regulation, allosterically activated by GTP. Inhibited by UTP. Functionally, catalyzes the reversible phosphorylation of UMP to UDP. This chain is Uridylate kinase, found in Campylobacter hominis (strain ATCC BAA-381 / DSM 21671 / CCUG 45161 / LMG 19568 / NCTC 13146 / CH001A).